The chain runs to 445 residues: Squalene synthase (445 aa).

2 helical membrane passes run 291 to 311 and 405 to 425; these read STFT…DLVY and LIVC…IAYV.

Belongs to the phytoene/squalene synthase family. The cofactor is Mg(2+).

The protein resides in the endoplasmic reticulum membrane. It carries out the reaction 2 (2E,6E)-farnesyl diphosphate + NADPH + H(+) = squalene + 2 diphosphate + NADP(+). It catalyses the reaction 2 (2E,6E)-farnesyl diphosphate + NADH + H(+) = squalene + 2 diphosphate + NAD(+). It functions in the pathway terpene metabolism; lanosterol biosynthesis; lanosterol from farnesyl diphosphate: step 1/3. Functionally, catalyzes the condensation of 2 two farnesyl pyrophosphate moieties to form squalene. It is the first committed enzyme of the sterol biosynthesis pathway. Required for the biosynthesis of ergosterol. This chain is Squalene synthase (SQS1), found in Yarrowia lipolytica (strain CLIB 122 / E 150) (Yeast).